Consider the following 722-residue polypeptide: Neprilysin-1 (722 aa).

The signal sequence occupies residues 1–17 (MAVALLVALCVVSSRMA). Positions 32 to 722 (VCNSPVCQKA…MNPTHKCLLW (691 aa)) constitute a Peptidase M13 domain. 5 cysteine pairs are disulfide-bonded: cysteine 33/cysteine 38, cysteine 56/cysteine 707, cysteine 64/cysteine 667, cysteine 120/cysteine 378, and cysteine 589/cysteine 719. Residues asparagine 100, asparagine 184, asparagine 207, and asparagine 424 are each glycosylated (N-linked (GlcNAc...) asparagine). Residue histidine 552 coordinates Zn(2+). Residue glutamate 553 is part of the active site. Histidine 556 serves as a coordination point for Zn(2+). An N-linked (GlcNAc...) asparagine glycan is attached at asparagine 609. Residue glutamate 614 participates in Zn(2+) binding. Aspartate 618 functions as the Proton donor in the catalytic mechanism.

Belongs to the peptidase M13 family. The cofactor is Zn(2+). Post-translationally, contains 5 disulfide bonds. Expressed by the venom gland.

The protein localises to the secreted. This Trittame loki (Brush-footed trapdoor spider) protein is Neprilysin-1.